The primary structure comprises 117 residues: DNA-directed RNA polymerase II subunit RPB11 (117 aa).

The protein belongs to the archaeal Rpo11/eukaryotic RPB11/RPC19 RNA polymerase subunit family. In terms of assembly, component of the RNA polymerase II (Pol II) complex consisting of 12 subunits.

It localises to the nucleus. In terms of biological role, DNA-dependent RNA polymerase catalyzes the transcription of DNA into RNA using the four ribonucleoside triphosphates as substrates. Component of RNA polymerase II which synthesizes mRNA precursors and many functional non-coding RNAs. Pol II is the central component of the basal RNA polymerase II transcription machinery. It is composed of mobile elements that move relative to each other. RPB11 is part of the core element with the central large cleft. This Drosophila melanogaster (Fruit fly) protein is DNA-directed RNA polymerase II subunit RPB11.